The primary structure comprises 263 residues: uncharacterized protein (263 aa).

It to B.subtilis soj.

This is an uncharacterized protein from Pseudomonas putida (strain ATCC 47054 / DSM 6125 / CFBP 8728 / NCIMB 11950 / KT2440).